A 156-amino-acid polypeptide reads, in one-letter code: Small ribosomal subunit protein uS7 (156 aa).

Belongs to the universal ribosomal protein uS7 family. Part of the 30S ribosomal subunit. Contacts proteins S9 and S11.

In terms of biological role, one of the primary rRNA binding proteins, it binds directly to 16S rRNA where it nucleates assembly of the head domain of the 30S subunit. Is located at the subunit interface close to the decoding center, probably blocks exit of the E-site tRNA. This is Small ribosomal subunit protein uS7 from Pectobacterium carotovorum subsp. carotovorum (strain PC1).